A 315-amino-acid polypeptide reads, in one-letter code: 6-phosphogluconolactonase-like protein 2 (315 aa).

2 positions are modified to phosphoserine: serine 42 and serine 64. Residues 59-85 are disordered; that stretch reads CKSTASAAEGKSGSSGSGSGSSKPKKE. A compositionally biased stretch (low complexity) spans 60 to 70; the sequence is KSTASAAEGKS.

This sequence belongs to the glucosamine/galactosamine-6-phosphate isomerase family. 6-phosphogluconolactonase subfamily.

It is found in the cytoplasm. May be involved in regulation of tRNA subcellular distribution. The chain is 6-phosphogluconolactonase-like protein 2 (SOL2) from Saccharomyces cerevisiae (strain ATCC 204508 / S288c) (Baker's yeast).